The sequence spans 976 residues: Terminal uridylyltransferase 1 (976 aa).

Disordered regions lie at residues 1 to 47 (MVSK…DADF) and 129 to 185 (TGRS…TTEG). A required for oligomerization and may contribute to the incorporation into the MPsome complex region spans residues 1–188 (MVSKYHRLLQ…EDDTTEGPRG (188 aa)). Acidic residues predominate over residues 147-183 (ADDESDGNLDTDGSDASEGDEVESTTDADVYGEDDTT). A C2H2-type; atypical zinc finger spans residues 190 to 221 (VRLYSCDACPHAVFTTHAALLAHAEEHHADLL). Positions 195, 198, 212, and 217 each coordinate Zn(2+). UTP is bound by residues serine 298 and 309-312 (ADID). Residues aspartate 310 and aspartate 312 each coordinate Mg(2+). Arginine 358 is a binding site for RNA. The PAP-associated domain occupies 366–425 (ASSPILTVARRDAEDVVARSIRFILNGPATREDRLLLEGSVRDAVGPTGVQQVWWNRTSD). UTP is bound by residues 480 to 484 (GIRNS), lysine 505, lysine 509, and 523 to 524 (SY). The Nucleotide recognition motif (NRM) signature appears at 652-661 (IEDPYEENLN). The tract at residues 700–976 (DSSGTPAAGG…SKVTPFKSPR (277 aa)) is important for catalytic activity and RNA binding. The interval 732–755 (SESRRLPQSNSDNSGRIANGDNES) is disordered.

It belongs to the DNA polymerase type-B-like family. As to quaternary structure, oligomer. Component of the mitochondrial 3' processome (MPsome) complex composed at least of terminal uridylyltransferase KRET1/TUT1, 3'-5' exonuclease DSS1, MPSS1, MPSS2 and MPSS3. Within the complex, interacts with DSS1, MPSS1 and MPSS3. Mg(2+) is required as a cofactor. It depends on Mn(2+) as a cofactor.

It localises to the mitochondrion. It catalyses the reaction RNA(n) + UTP = RNA(n)-3'-uridine ribonucleotide + diphosphate. Functionally, terminal uridylyltransferase which is involved in the post-transcriptional editing of mitochondrial RNA, a process involving the addition and deletion of uridine (U) nucleotides in the pre-RNA. Specifically, catalyzes the addition of Us to the 3'-hydroxyl group of guided RNA (gRNA), ribosomal RNA (rRNA) and some mRNAs. As part of the mitochondrial 3' processome (MPsome), catalyzes the primary 3' uridylation of gRNA precursors to facilitate their recognition and to induce their processive 3'-5' degradation by DSS1, and the secondary 3' uridylation of mature gRNAs. Involved in the 3' uridylylation of the long A/U tail of some edited and never-edited mRNAs. Promotes 3' uridylylation-mediated decay of some never-edited mRNAs. Does not mediate RNA-independent UTP polymerization. This is Terminal uridylyltransferase 1 from Trypanosoma brucei brucei.